The primary structure comprises 485 residues: NADH-quinone oxidoreductase subunit N (485 aa).

A run of 14 helical transmembrane segments spans residues 10 to 30, 40 to 60, 71 to 91, 107 to 127, 129 to 149, 164 to 184, 209 to 229, 248 to 268, 276 to 296, 304 to 324, 336 to 356, 377 to 397, 410 to 430, and 454 to 474; these read ILPE…GLFL, IFFQ…EYLI, VVFS…AVFV, GDFY…TAAH, LVTI…LIAI, FVLG…VYGM, FLLV…GAFP, IVAT…LFVG, WIYL…LVAL, LLGY…TLNP, VIVY…ISVG, AFIL…GGFI, GNYF…FYYV, and LIAL…PMLL.

The protein belongs to the complex I subunit 2 family. As to quaternary structure, NDH-1 is composed of 14 different subunits. Subunits NuoA, H, J, K, L, M, N constitute the membrane sector of the complex.

It localises to the cell inner membrane. It catalyses the reaction a quinone + NADH + 5 H(+)(in) = a quinol + NAD(+) + 4 H(+)(out). Functionally, NDH-1 shuttles electrons from NADH, via FMN and iron-sulfur (Fe-S) centers, to quinones in the respiratory chain. The immediate electron acceptor for the enzyme in this species is believed to be ubiquinone. Couples the redox reaction to proton translocation (for every two electrons transferred, four hydrogen ions are translocated across the cytoplasmic membrane), and thus conserves the redox energy in a proton gradient. This is NADH-quinone oxidoreductase subunit N from Francisella tularensis subsp. holarctica (strain FTNF002-00 / FTA).